The primary structure comprises 39 residues: Cytochrome b559 subunit beta (39 aa).

A helical transmembrane segment spans residues 14–30 (WLAVHGLAIPTVSFLGS). Heme is bound at residue His18.

This sequence belongs to the PsbE/PsbF family. Heterodimer of an alpha subunit and a beta subunit. PSII is composed of 1 copy each of membrane proteins PsbA, PsbB, PsbC, PsbD, PsbE, PsbF, PsbH, PsbI, PsbJ, PsbK, PsbL, PsbM, PsbT, PsbX, PsbY, PsbZ, Psb30/Ycf12, at least 3 peripheral proteins of the oxygen-evolving complex and a large number of cofactors. It forms dimeric complexes. Requires heme b as cofactor.

The protein localises to the plastid. It is found in the chloroplast thylakoid membrane. This b-type cytochrome is tightly associated with the reaction center of photosystem II (PSII). PSII is a light-driven water:plastoquinone oxidoreductase that uses light energy to abstract electrons from H(2)O, generating O(2) and a proton gradient subsequently used for ATP formation. It consists of a core antenna complex that captures photons, and an electron transfer chain that converts photonic excitation into a charge separation. The sequence is that of Cytochrome b559 subunit beta from Beta vulgaris (Sugar beet).